The following is a 176-amino-acid chain: 2-C-methyl-D-erythritol 2,4-cyclodiphosphate synthase (176 aa).

3 residues coordinate a divalent metal cation: D23, H25, and H60. 23–25 (DSH) provides a ligand contact to 4-CDP-2-C-methyl-D-erythritol 2-phosphate. Residue 149–152 (TSGE) coordinates 4-CDP-2-C-methyl-D-erythritol 2-phosphate.

The protein belongs to the IspF family. As to quaternary structure, homotrimer. Requires a divalent metal cation as cofactor.

It carries out the reaction 4-CDP-2-C-methyl-D-erythritol 2-phosphate = 2-C-methyl-D-erythritol 2,4-cyclic diphosphate + CMP. It functions in the pathway isoprenoid biosynthesis; isopentenyl diphosphate biosynthesis via DXP pathway; isopentenyl diphosphate from 1-deoxy-D-xylulose 5-phosphate: step 4/6. Functionally, involved in the biosynthesis of isopentenyl diphosphate (IPP) and dimethylallyl diphosphate (DMAPP), two major building blocks of isoprenoid compounds. Catalyzes the conversion of 4-diphosphocytidyl-2-C-methyl-D-erythritol 2-phosphate (CDP-ME2P) to 2-C-methyl-D-erythritol 2,4-cyclodiphosphate (ME-CPP) with a corresponding release of cytidine 5-monophosphate (CMP). The protein is 2-C-methyl-D-erythritol 2,4-cyclodiphosphate synthase of Chlamydia caviae (strain ATCC VR-813 / DSM 19441 / 03DC25 / GPIC) (Chlamydophila caviae).